The primary structure comprises 575 residues: Sulfite reductase [NADPH] hemoprotein beta-component (575 aa).

Positions 439, 445, 484, and 488 each coordinate [4Fe-4S] cluster. Cys-488 contributes to the siroheme binding site.

Belongs to the nitrite and sulfite reductase 4Fe-4S domain family. As to quaternary structure, alpha(8)-beta(8). The alpha component is a flavoprotein, the beta component is a hemoprotein. Siroheme is required as a cofactor. It depends on [4Fe-4S] cluster as a cofactor.

The catalysed reaction is hydrogen sulfide + 3 NADP(+) + 3 H2O = sulfite + 3 NADPH + 4 H(+). It participates in sulfur metabolism; hydrogen sulfide biosynthesis; hydrogen sulfide from sulfite (NADPH route): step 1/1. Its function is as follows. Component of the sulfite reductase complex that catalyzes the 6-electron reduction of sulfite to sulfide. This is one of several activities required for the biosynthesis of L-cysteine from sulfate. In Blochmanniella pennsylvanica (strain BPEN), this protein is Sulfite reductase [NADPH] hemoprotein beta-component.